We begin with the raw amino-acid sequence, 428 residues long: MEEVTTCSFNSPLFRQEDDRGITYRIPALLYIPPTHTFLAFAEKRSTRRDEDALHLVLRRGLRIGQLVQWGPLKPLMEATLPGHRTMNPCPVWEQKSGCVFLFFICVRGHVTERQQIVSGRNAARLCFIYSQDAGCSWSEVRDLTEEVIGSELKHWATFAVGPGHGIQLQSGRLVIPAYTYYIPSWFFCFQLPCKTRPHSLMIYSDDLGVTWHHGRLIRPMVTVECEVAEVTGRAGHPVLYCSARTPNRCRAEALSTDHGEGFQRLALSRQLCEPPHGCQGSVVSFRPLEIPHRCQDSSSKDAPTIQQSSPGSSLRLEEEAGTPSESWLLYSHPTSRKQRVDLGIYLNQTPLEAACWSRPWILHCGPCGYSDLAALEEEGLFGCLFECGTKQECEQIAFRLFTHREILSHLQGDCTSPGRNPSQFKSN.

The FRIP motif motif lies at 24–27; the sequence is YRIP. Positions 25 and 45 each coordinate substrate. The active-site Proton acceptor is D50. Residues 129-140 form a BNR 1 repeat; sequence IYSQDAGCSWSE. Substrate is bound by residues Y179 and Y181. A BNR 2 repeat occupies 203–214; sequence IYSDDLGVTWHH. Residues E225 and R245 each coordinate substrate. One copy of the BNR 3 repeat lies at 254-265; sequence ALSTDHGEGFQR. Residues 294-318 are disordered; the sequence is RCQDSSSKDAPTIQQSSPGSSLRLE. Residues 301–313 show a composition bias toward polar residues; it reads KDAPTIQQSSPGS. S313 carries the post-translational modification Phosphoserine. Position 340 (R340) interacts with substrate. The active-site Nucleophile is Y370. Residue E387 is part of the active site.

The protein belongs to the glycosyl hydrolase 33 family. As to quaternary structure, interacts with CAV1; this interaction enhances NEU3 sialidase activity within caveola. Interacts with EGFR; this interaction mediates desialylation of EGFR and enhances downstream signaling. In terms of processing, palmitoylated; may regulate intracellular trafficking and anchorage to plasma membrane and endomembranes. In terms of tissue distribution, highly expressed in skeletal muscle, testis, adrenal gland and thymus, followed by pancreas, liver, heart and thymus. Weakly expressed in kidney, placenta, brain and lung.

The protein localises to the cell membrane. Its subcellular location is the membrane. It localises to the caveola. The protein resides in the early endosome membrane. It is found in the recycling endosome membrane. The protein localises to the lysosome membrane. It catalyses the reaction Hydrolysis of alpha-(2-&gt;3)-, alpha-(2-&gt;6)-, alpha-(2-&gt;8)- glycosidic linkages of terminal sialic acid residues in oligosaccharides, glycoproteins, glycolipids, colominic acid and synthetic substrates.. It carries out the reaction a ganglioside GD1a + H2O = a ganglioside GM1 + N-acetylneuraminate. The enzyme catalyses a ganglioside GD1a (d18:1(4E)) + H2O = a ganglioside GM1 (d18:1(4E)) + N-acetylneuraminate. The catalysed reaction is a ganglioside GD1b + H2O = a ganglioside GM1 + N-acetylneuraminate. It catalyses the reaction a ganglioside GD1b (d18:1(4E)) + H2O = a ganglioside GM1 (d18:1(4E)) + N-acetylneuraminate. It carries out the reaction a ganglioside GD3 + H2O = a ganglioside GM3 + N-acetylneuraminate. The enzyme catalyses a ganglioside GD3 (d18:1(4E)) + H2O = a ganglioside GM3 (d18:1(4E)) + N-acetylneuraminate. The catalysed reaction is a ganglioside GM3 + H2O = a beta-D-galactosyl-(1-&gt;4)-beta-D-glucosyl-(1&lt;-&gt;1)-ceramide + N-acetylneuraminate. It catalyses the reaction a ganglioside GM1 + H2O = a ganglioside GA1 + N-acetylneuraminate. It carries out the reaction a ganglioside GM1 (d18:1(4E)) + H2O = a ganglioside GA1 (d18:1(4E)) + N-acetylneuraminate. The enzyme catalyses a ganglioside GM2 (d18:1(4E)) + H2O = a ganglioside GA2 (d18:1(4E)) + N-acetylneuraminate. The catalysed reaction is a ganglioside GM3 (d18:1(4E)) + H2O = a beta-D-Gal-(1-&gt;4)-beta-D-Glc-(1&lt;-&gt;1)-Cer(d18:1(4E)) + N-acetylneuraminate. It catalyses the reaction a ganglioside GT1b + H2O = a ganglioside GD1b + N-acetylneuraminate. In terms of biological role, exo-alpha-sialidase that catalyzes the hydrolytic cleavage of the terminal sialic acid (N-acetylneuraminic acid, Neu5Ac) of a glycan moiety in the catabolism of glycolipids, glycoproteins and oligosacharides. Displays high catalytic efficiency for gangliosides including alpha-(2-&gt;3)-sialylated GD1a and GM3 and alpha-(2-&gt;8)-sialylated GD3. Plays a role in the regulation of transmembrane signaling through the modulation of ganglioside content of the lipid bilayer and by direct interaction with signaling receptors, such as EGFR. Desialylates EGFR and activates downstream signaling in proliferating cells. Contributes to clathrin-mediated endocytosis by regulating sorting of endocytosed receptors to early and recycling endosomes. This is Sialidase-3 (NEU3) from Homo sapiens (Human).